The chain runs to 925 residues: MVLPTTKDATAAGAGFDTVRIIGDIDALAEKHAGHEDVFRSAVSRLLKAELAKVRDAAQAKLLRDRHGRHCAEWLCFVQDEIIRLSFSAATRHLYHSPIPSDGERMAVVATGGYGRGLMAPESDIDLLFILPYKQTAWGEQVAEAILYCLWDMGLNVGHATRSVNESIRQARRDMTVRTGILEARFLTGDRALYDELISRFDTEVVQGTAAEFVAAKLAEREERHHRAGQSRYLVEPNVKDGKGGLRDLHTLFWIAKYVYRVRESHELLRRNVFDVREYRTFRRCADFLWSVRCNLHFATGRAEERLSFDLQREIAVRLGYTSHPGMQDVERFMKHYFLTAKDVGDLTAILCAKLEDQQAKPAPVLSRAMSKPPGAEVRRVPDSDDFIIDNNRINLAAPDLFKRDPVNLIRLFRLAQKNNLAFHPDALRMVRRSRRLINAQLREDPESNRLFIEILTSNDAETVLRRMNETGVLGEFIRAFGKIVSMMQFNMYHHYTVDEHLIRCIGILQDIERGDNDEVALAGELMRTINPEHRPVIYIATLLHDVAKGRPEDHSIAGARVARRLCPRLGFNAADTELVAWLIEQHLTMSKVAQSRDLSDRKTIENFAAVVQSVERMKLLTILTTADIRGVGPGVWNGWKAQLLRTLYYETEPVLTGGFSEVNRAQRMAAAEAEFRAAFTEWSGHELNAYIARHYPAYWLKVDLEHKIRHARFLRASEQSGRKLNINVGFDEARGVTELTILAADHPWLLSIIAGACASAGANIVDAQIYTTTDGQALDTIAISREYERDEDEGRRAARIAEIIEQVLEGRLRLPDVMPSRAAGKRLRPFVVEPKVTINNQWSDRHTMIEVSGLDRPGLLFQLTTAISKLNLNIASAHVATFGERARDVFYVTDLLGARITAPTRQAAIKRALVHLLASGNTAE.

The tract at residues 1–382 (MVLPTTKDAT…PPGAEVRRVP (382 aa)) is uridylyltransferase. The interval 383 to 738 (DSDDFIIDNN…VGFDEARGVT (356 aa)) is uridylyl-removing. Residues 498–621 (VDEHLIRCIG…VQSVERMKLL (124 aa)) enclose the HD domain. ACT domains lie at 739-820 (ELTI…DVMP) and 849-925 (MIEV…NTAE).

This sequence belongs to the GlnD family. Requires Mg(2+) as cofactor.

The enzyme catalyses [protein-PII]-L-tyrosine + UTP = [protein-PII]-uridylyl-L-tyrosine + diphosphate. It carries out the reaction [protein-PII]-uridylyl-L-tyrosine + H2O = [protein-PII]-L-tyrosine + UMP + H(+). Uridylyltransferase (UTase) activity is inhibited by glutamine, while glutamine activates uridylyl-removing (UR) activity. Functionally, modifies, by uridylylation and deuridylylation, the PII regulatory proteins (GlnB and homologs), in response to the nitrogen status of the cell that GlnD senses through the glutamine level. Under low glutamine levels, catalyzes the conversion of the PII proteins and UTP to PII-UMP and PPi, while under higher glutamine levels, GlnD hydrolyzes PII-UMP to PII and UMP (deuridylylation). Thus, controls uridylylation state and activity of the PII proteins, and plays an important role in the regulation of nitrogen assimilation and metabolism. In Nitrobacter winogradskyi (strain ATCC 25391 / DSM 10237 / CIP 104748 / NCIMB 11846 / Nb-255), this protein is Bifunctional uridylyltransferase/uridylyl-removing enzyme.